A 138-amino-acid polypeptide reads, in one-letter code: Cysteine desulfuration protein SufE (138 aa).

The active-site Cysteine persulfide intermediate is the Cys-51.

This sequence belongs to the SufE family. In terms of assembly, homodimer. Interacts with SufS.

It localises to the cytoplasm. Its pathway is cofactor biosynthesis; iron-sulfur cluster biosynthesis. Its function is as follows. Participates in cysteine desulfuration mediated by SufS. Cysteine desulfuration mobilizes sulfur from L-cysteine to yield L-alanine and constitutes an essential step in sulfur metabolism for biosynthesis of a variety of sulfur-containing biomolecules. Functions as a sulfur acceptor for SufS, by mediating the direct transfer of the sulfur atom from the S-sulfanylcysteine of SufS, an intermediate product of cysteine desulfuration process. The chain is Cysteine desulfuration protein SufE from Salmonella arizonae (strain ATCC BAA-731 / CDC346-86 / RSK2980).